Reading from the N-terminus, the 915-residue chain is Transferrin-binding protein A (915 aa).

A signal peptide spans 1-24 (MQQQHLFRFNILCLSLMTALPAYA). The Periplasmic segment spans residues 25-187 (ENVQAGQAQE…ADDVIGEGRQ (163 aa)). The short motif at 38–45 (DTIQVKAK) is the TonB box element. The 126-residue stretch at 51 to 176 (RDNEVTGLGK…LAGSVAFQTK (126 aa)) folds into the TBDR plug domain. Residues 121–139 (SYTAQAALGGTRTAGSSGA) are plug loop, interacts with transferrin. The TBDR beta-barrel domain maps to 187–915 (QWGIQSKTAY…NYTFSLEMKF (729 aa)). The beta stranded transmembrane segment at 188–197 (WGIQSKTAYS) threads the bilayer. Residues 198-203 (GKNRGL) lie on the Extracellular side of the membrane. A beta stranded membrane pass occupies residues 204-213 (TQSIALAGRI). The Periplasmic segment spans residues 214–215 (GG). Residues 216–225 (AEALLIHTGR) form a beta stranded membrane-spanning segment. The Extracellular portion of the chain corresponds to 226 to 309 (RAGEIRAHED…FLADPLSYES (84 aa)). Residues 310–319 (RSWLFRPGFR) traverse the membrane as a beta stranded segment. Topologically, residues 320 to 324 (FENKR) are periplasmic. The chain crosses the membrane as a beta stranded span at residues 325 to 334 (HYIGGILEHT). The Extracellular segment spans residues 335–406 (QQTFDTRDMT…VFYDETHTKS (72 aa)). The segment at 351-361 (KAVFDANKKQA) is L3 helix finger, interacts with transferrin. A beta stranded membrane pass occupies residues 407–415 (RYGLEYVYT). At 416–423 (NADKDTWA) the chain is on the periplasmic side. The beta stranded transmembrane segment at 424–433 (DYARLSYDRQ) threads the bilayer. Topologically, residues 434–478 (GIGLDNHFQQTHCSADGSDKYCRPSADKPFSYYKSDRVIYGESHR) are extracellular. The chain crosses the membrane as a beta stranded span at residues 479 to 488 (LLQAAFKKSF). The Periplasmic segment spans residues 489 to 494 (DTAKIR). The beta stranded transmembrane segment at 495 to 504 (HNLSVNLGFD) threads the bilayer. The Extracellular segment spans residues 505–583 (RFGSNLRHQD…PRSINGKSYY (79 aa)). A disordered region spans residues 523–542 (AYSSNTPPQNNGKKISPNGS). Residues 584 to 592 (AAVRDNVRL) traverse the membrane as a beta stranded segment. Residues 593-594 (GR) are Periplasmic-facing. Residues 595–603 (WADVGAGLR) form a beta stranded membrane-spanning segment. The Extracellular portion of the chain corresponds to 604–623 (YDYRSTHSDDGSVSTGTHRT). Residues 624–633 (LSWNAGIVLK) traverse the membrane as a beta stranded segment. At 634 to 637 (PTDW) the chain is on the periplasmic side. The beta stranded transmembrane segment at 638–647 (LDLTYRTSTG) threads the bilayer. Over 648 to 675 (FRLPSFAEMYGWRAGVQSKAVKIDPEKS) the chain is Extracellular. A beta stranded transmembrane segment spans residues 676 to 685 (FNKEAGIVFK). Residues 686–689 (GDFG) are Periplasmic-facing. The beta stranded transmembrane segment at 690 to 699 (NLEASWFNNA) threads the bilayer. Residues 700–733 (YRDLIVRGYEAQIKDGKEEAKGDPAYLNAQSARI) lie on the Extracellular side of the membrane. A beta stranded membrane pass occupies residues 734 to 743 (TGINILGKID). Topologically, residues 744–755 (WNGVWDKLPEGW) are periplasmic. Residues 756–765 (YSTFAYNRVR) traverse the membrane as a beta stranded segment. Topologically, residues 766-790 (VRDIKKRADRTDIQSHLFDAIQPSR) are extracellular. The chain crosses the membrane as a beta stranded span at residues 791-799 (YVVGLGYDQ). Residues 800–802 (PEG) lie on the Periplasmic side of the membrane. Residues 803–811 (KWGVNGMLT) form a beta stranded membrane-spanning segment. At 812–845 (YSKAKEITELLGSRALLNGNSRNTKATARRTRPW) the chain is on the extracellular side. The beta stranded transmembrane segment at 846-855 (YIVDVSGYYT) threads the bilayer. The Periplasmic segment spans residues 856-860 (VKKHF). Residues 861–870 (TLRAGVYNLL) traverse the membrane as a beta stranded segment. The Extracellular segment spans residues 871–905 (NYRYVTWENVRQTAGGAVNQHKNVGVYNRYAAPGR). The short motif at 898-915 (NRYAAPGRNYTFSLEMKF) is the TonB C-terminal box element. A beta stranded membrane pass occupies residues 906 to 915 (NYTFSLEMKF).

It belongs to the TonB-dependent receptor family. As to quaternary structure, binds both human apo- and holo-transferrin (TF), via the TF C-terminus. Forms a large complex with TF and TbpB.

It localises to the cell outer membrane. In terms of biological role, neisseria acquires iron by extracting it from serum transferrin (TF) in its human host. Acts as a TF receptor and is required for TF utilization. Binds both apo- and holo-TF, via the TF C-terminus. The sequence is that of Transferrin-binding protein A from Neisseria meningitidis serogroup B (strain ATCC BAA-335 / MC58).